The chain runs to 357 residues: Histidinol-phosphate aminotransferase 2 (357 aa).

An N6-(pyridoxal phosphate)lysine modification is found at K215.

It belongs to the class-II pyridoxal-phosphate-dependent aminotransferase family. Histidinol-phosphate aminotransferase subfamily. In terms of assembly, homodimer. The cofactor is pyridoxal 5'-phosphate.

It carries out the reaction L-histidinol phosphate + 2-oxoglutarate = 3-(imidazol-4-yl)-2-oxopropyl phosphate + L-glutamate. It functions in the pathway amino-acid biosynthesis; L-histidine biosynthesis; L-histidine from 5-phospho-alpha-D-ribose 1-diphosphate: step 7/9. The polypeptide is Histidinol-phosphate aminotransferase 2 (Thiobacillus denitrificans (strain ATCC 25259 / T1)).